We begin with the raw amino-acid sequence, 397 residues long: Golgi-associated RAB2 interactor protein 2 (397 aa).

2 disordered regions span residues 1–24 and 342–397; these read MKKS…PDSK and QTTL…KLLN. 3 stretches are compositionally biased toward basic and acidic residues: residues 10–24, 353–369, and 376–397; these read TRID…PDSK, EKSK…RTMD, and KAEE…KLLN.

It belongs to the GARIN family. Interacts with CALM1.

It is found in the cell projection. The protein resides in the cilium. The protein localises to the flagellum. Its function is as follows. Seems to play a role in sperm motility. The sequence is that of Golgi-associated RAB2 interactor protein 2 (GARIN2) from Bos taurus (Bovine).